The primary structure comprises 325 residues: tRNA N6-adenosine threonylcarbamoyltransferase (325 aa).

Fe cation-binding residues include His111 and His115. Residues 134–138 (LISGG), Asp167, Gly180, and Asn277 contribute to the substrate site. Fe cation is bound at residue Asp305.

Belongs to the KAE1 / TsaD family. Fe(2+) is required as a cofactor.

It localises to the cytoplasm. Its subcellular location is the secreted. The enzyme catalyses L-threonylcarbamoyladenylate + adenosine(37) in tRNA = N(6)-L-threonylcarbamoyladenosine(37) in tRNA + AMP + H(+). Required for the formation of a threonylcarbamoyl group on adenosine at position 37 (t(6)A37) in tRNAs that read codons beginning with adenine. Is involved in the transfer of the threonylcarbamoyl moiety of threonylcarbamoyl-AMP (TC-AMP) to the N6 group of A37, together with TsaE and TsaB. TsaD likely plays a direct catalytic role in this reaction. The protein is tRNA N6-adenosine threonylcarbamoyltransferase of Mannheimia haemolytica (Pasteurella haemolytica).